Reading from the N-terminus, the 881-residue chain is Protein translocase subunit SecA (881 aa).

ATP-binding positions include Gln-83, 101-105 (GEGKT), and Asp-492.

This sequence belongs to the SecA family.

It is found in the plastid. Its subcellular location is the chloroplast stroma. The protein localises to the chloroplast thylakoid membrane. It catalyses the reaction ATP + H2O + cellular proteinSide 1 = ADP + phosphate + cellular proteinSide 2.. Functionally, has a central role in coupling the hydrolysis of ATP to the transfer of proteins across the thylakoid membrane. The sequence is that of Protein translocase subunit SecA from Emiliania huxleyi (Coccolithophore).